The sequence spans 595 residues: DNA-binding protein REB1 (595 aa).

Composition is skewed to basic and acidic residues over residues 25–46 (KSGEDDAVNKQKSVDWFLKEQD) and 54–71 (DPGRDQDQEDNAKHRDAN). The segment at 25–208 (KSGEDDAVNK…IDDHVDDVSV (184 aa)) is disordered. The segment covering 75 to 84 (AVAAAAVAAA) has biased composition (low complexity). Residues 114–123 (KKSKKNKNKL) show a composition bias toward basic residues. Positions 163 to 176 (NIASQHPDFQQYLN) are enriched in polar residues. Residues 182 to 205 (EPKKEKSEERSYGDLSNIDDHVDD) are compositionally biased toward basic and acidic residues. Residues 333 to 384 (HIFEQRGKWTPEEDAELARWCAEKEGQWSNIGKVLGRMPEDCRDRWRNYVKC) form the HTH myb-type domain. Positions 360–382 (WSNIGKVLGRMPEDCRDRWRNYV) form a DNA-binding region, H-T-H motif. The Myb-like domain maps to 385–490 (GPNRAANKWS…QCRYKWNKLL (106 aa)). Residues 414-456 (TAYEDGEDDEMKDSSTKIEDSGDADMLDVQDSDKKPSISNSKK) are disordered. Over residues 434-443 (SGDADMLDVQ) the composition is skewed to acidic residues.

The protein localises to the nucleus. Functionally, DNA-binding protein that recognizes sites within both the enhancer and the promoter of rRNA transcription, as well as upstream of many genes transcribed by RNA polymerase II. It is essential for cell growth. May stimulate or inhibit transcription. Specifically recognizes the sequence 5'-CCGGGTA-3' or 5'-CGGGTRR-3' (where R is any purine). This Kluyveromyces lactis (strain ATCC 8585 / CBS 2359 / DSM 70799 / NBRC 1267 / NRRL Y-1140 / WM37) (Yeast) protein is DNA-binding protein REB1 (REB1).